The chain runs to 490 residues: GTPase Der (490 aa).

EngA-type G domains lie at 3 to 166 (PVVA…MEDL) and 203 to 376 (IKLA…DSST). GTP-binding positions include 9–16 (GRPNVGKS), 56–60 (DTGGI), 118–121 (NKTD), 209–216 (GRPNVGKS), 256–260 (DTAGV), and 321–324 (NKWD). The 85-residue stretch at 377–461 (RRVGTSMLTR…PIRIQFKEGE (85 aa)) folds into the KH-like domain.

It belongs to the TRAFAC class TrmE-Era-EngA-EngB-Septin-like GTPase superfamily. EngA (Der) GTPase family. In terms of assembly, associates with the 50S ribosomal subunit.

GTPase that plays an essential role in the late steps of ribosome biogenesis. This Escherichia coli O17:K52:H18 (strain UMN026 / ExPEC) protein is GTPase Der.